A 565-amino-acid chain; its full sequence is DNA primase (565 aa).

The CHC2-type zinc finger occupies Cys-37–Cys-61. In terms of domain architecture, Toprim spans Gly-248–Tyr-329. Residues Glu-254, Asp-298, and Asp-300 each contribute to the Mg(2+) site.

This sequence belongs to the DnaG primase family. As to quaternary structure, monomer. Interacts with DnaB. Requires Zn(2+) as cofactor. The cofactor is Mg(2+).

It catalyses the reaction ssDNA + n NTP = ssDNA/pppN(pN)n-1 hybrid + (n-1) diphosphate.. In terms of biological role, RNA polymerase that catalyzes the synthesis of short RNA molecules used as primers for DNA polymerase during DNA replication. The sequence is that of DNA primase from Thermotoga maritima (strain ATCC 43589 / DSM 3109 / JCM 10099 / NBRC 100826 / MSB8).